We begin with the raw amino-acid sequence, 119 residues long: Protein MGF 110-13L-B (119 aa).

Residues 1–16 (MKLLALLCILIWLSQP) form the signal peptide.

This sequence belongs to the asfivirus MGF 110 family.

The polypeptide is Protein MGF 110-13L-B (Ornithodoros (relapsing fever ticks)).